Consider the following 170-residue polypeptide: Adenine phosphoribosyltransferase (170 aa).

This sequence belongs to the purine/pyrimidine phosphoribosyltransferase family. In terms of assembly, homodimer.

It is found in the cytoplasm. It catalyses the reaction AMP + diphosphate = 5-phospho-alpha-D-ribose 1-diphosphate + adenine. The protein operates within purine metabolism; AMP biosynthesis via salvage pathway; AMP from adenine: step 1/1. In terms of biological role, catalyzes a salvage reaction resulting in the formation of AMP, that is energically less costly than de novo synthesis. The sequence is that of Adenine phosphoribosyltransferase from Mycoplasma mycoides subsp. mycoides SC (strain CCUG 32753 / NCTC 10114 / PG1).